Reading from the N-terminus, the 346-residue chain is LRP2-binding protein (346 aa).

Residues 58 to 91 (AMAYFLRGQLYFEEGWYEEALAQFEEIQEKDHQA) form a TPR repeat. 6 Sel1-like repeats span residues 92–124 (IYQLGVMYYDGLGTVADAEKGVGYMKKILDSSC), 132–167 (FAAAYNLGRAYFEGKGVKRSDEEAERLWLYAADNGN), 172–205 (VKAQSILGLFYSMKEPKDLEKAFFWHSEACGNGN), 206–241 (LESQGALGLMYLYGQGIRQDTDAALHCLREAAERGN), 242–276 (VYAQGILVEYYYKMKFFTKCVSFSKRIADYDEVHD), and 296–331 (AMASFYYARCLQLGLGITKDEASAKHYYSKACRLNP).

Interacts with LRP2.

The protein resides in the cytoplasm. In terms of biological role, may act as an adapter that regulates LRP2 function. The sequence is that of LRP2-binding protein (Lrp2bp) from Rattus norvegicus (Rat).